The following is a 348-amino-acid chain: Phosphoribosylformylglycinamidine cyclo-ligase (348 aa).

The protein belongs to the AIR synthase family.

Its subcellular location is the cytoplasm. It carries out the reaction 2-formamido-N(1)-(5-O-phospho-beta-D-ribosyl)acetamidine + ATP = 5-amino-1-(5-phospho-beta-D-ribosyl)imidazole + ADP + phosphate + H(+). The protein operates within purine metabolism; IMP biosynthesis via de novo pathway; 5-amino-1-(5-phospho-D-ribosyl)imidazole from N(2)-formyl-N(1)-(5-phospho-D-ribosyl)glycinamide: step 2/2. This is Phosphoribosylformylglycinamidine cyclo-ligase from Geotalea daltonii (strain DSM 22248 / JCM 15807 / FRC-32) (Geobacter daltonii).